Consider the following 204-residue polypeptide: Probable UMP-CMP kinase 1 (204 aa).

31-36 is an ATP binding site; sequence GSGKGT. The interval 51–80 is NMP; it reads SAGDLLRAEIKSGSEFGAMIQSMIAEGRIV. A ribonucleoside 5'-phosphate contacts are provided by residues Arg57, 78-80, and 105-108; these read RIV and GFPR. Asn112 provides a ligand contact to CMP. The LID stretch occupies residues 143-151; the sequence is SRNQGREDD. Residue Arg144 participates in ATP binding. A ribonucleoside 5'-phosphate is bound by residues Arg148 and Arg159. Lys187 is a binding site for ATP.

It belongs to the adenylate kinase family. UMP-CMP kinase subfamily. Monomer. It depends on Mg(2+) as a cofactor.

The protein resides in the cytoplasm. Its subcellular location is the nucleus. It carries out the reaction CMP + ATP = CDP + ADP. The enzyme catalyses dCMP + ATP = dCDP + ADP. It catalyses the reaction UMP + ATP = UDP + ADP. In terms of biological role, catalyzes the phosphorylation of pyrimidine nucleoside monophosphates at the expense of ATP. Plays an important role in de novo pyrimidine nucleotide biosynthesis. Has preference for UMP and CMP as phosphate acceptors. The chain is Probable UMP-CMP kinase 1 (UMK1) from Arabidopsis thaliana (Mouse-ear cress).